We begin with the raw amino-acid sequence, 607 residues long: MDNLSDTLKKLKITAVDKTEDSLEGCLDCLLQALAQNNTETSEKIQASGILQLFASLLTPQSSCKAKVANIIAEVAKNEFMRIPCVDAGLISPLVQLLNSKDQEVLLQTGRALGNICYDSHEGRSAVDQAGGAQIVIDHLRSLCSITDPANEKLLTVFCGMLMNYSNENDSLQAQLINMGVIPTLVKLLGIHCQNAALTEMCLVAFGNLAELESSKEQFASTNIAEELVKLFKKQIEHDKREMIFEVLAPLAENDAIKLQLVEAGLVECLLEIVQQKVDSDKEDDITELKTGSDLMVLLLLGDESMQKLFEGGKGSVFQRVLSWIPSNNHQLQLAGALAIANFARNDANCIHMVDNGIVEKLMDLLDRHVEDGNVTVQHAALSALRNLAIPVINKAKMLSAGVTEAVLKFLKSEMPPVQFKLLGTLRMLIDAQAEAAEQLGKNVKLVERLVEWCEAKDHAGVMGESNRLLSALIRHSKSKDVIKTIVQSGGIKHLVTMATSEHVIMQNEALVALALIAALELGTAEKDLESAKLVQILHRLLADERSAPEIKYNSMVLICALMGSECLHKEVQDLAFLDVVSKLRSHENKSVAQQASLTEQRLTVES.

Residues 4–13 carry the Nuclear export signal (NES) motif; the sequence is LSDTLKKLKI. ARM repeat units follow at residues 89 to 131 and 170 to 211; these read GLIS…DQAG and DSLQ…NLAE. Residues 122-170 form a prevents binding to prenylated RHOA region; the sequence is EGRSAVDQAGGAQIVIDHLRSLCSITDPANEKLLTVFCGMLMNYSNEND. The residue at position 230 (Lys-230) is an N6-acetyllysine. The interacts with polybasic regions in GTPases stretch occupies residues 239-255; sequence DKREMIFEVLAPLAEND. 3 ARM repeats span residues 347–390, 391–431, and 479–519; these read DANC…NLAI, PVIN…MLID, and SKDV…LIAA. The interval 379 to 428 is critical for catalytic activity; sequence HAALSALRNLAIPVINKAKMLSAGVTEAVLKFLKSEMPPVQFKLLGTLRM.

Interacts with RABL3. Interacts with RHOT1. In terms of assembly, interacts with unprenylated RHOA; the interaction is direct. Interacts with RAP1A. Interacts with KRAS. Interacts with RAC1. Interacts with RAP1B. Preferentially interacts with unprenylated GTPases that will become geranylgeranylated. May also interact with prenylated GTPases. As to quaternary structure, interacts with prenylated RHOA; the interaction is direct and in a 1:1 stoichiometry. Interacts with RAP1A. Interacts with KRAS. Interacts with RAC1. Interacts with RAP1B. Preferentially interacts with prenylated GTPases. In terms of processing, forms covalent cross-links mediated by transglutaminase TGM2, between a glutamine and the epsilon-amino group of a lysine residue, forming homopolymers and heteropolymers.

It localises to the cytoplasm. The protein localises to the cytosol. The protein resides in the endoplasmic reticulum. It is found in the mitochondrion. Its subcellular location is the nucleus. In terms of biological role, acts as a GEF (guanine nucleotide exchange factor) for the Rho family of small GTP-binding proteins (G proteins) that stimulates the dissociation of GDP to enable subsequent binding of GTP. Additionally, appears to chaperone the processing and/or trafficking of small GTPases containing a C-terminal polybasic region independently of GEF activity. Targets include RAP1A/RAP1B, RHOA, RHOB, RHOC, RAC1 and KRAS. Regulates mitochondrial dynamics by controlling RHOT function to promote mitochondrial fission during high calcium conditions. Able to promote the Ca(2+) release from the endoplasmic reticulum via both inositol trisphosphate (Ins3P) and ryanodine sensitive receptors leading to a enhanced mitochondrial Ca(2+) uptake. Functionally, acts as a GEF (guanine nucleotide exchange factor) for unprenylated RHOA. Chaperones the entry and passage of small GTPases through the prenylation pathway. Recognizes the last amino acid in the GTPase C-terminal CAAX motif with a preference for 'Leu' over 'Met', indicating involvement in the geranylgeranylation pathway. Its function is as follows. Acts as a GEF (guanine nucleotide exchange factor) for prenylated RHOA. Acts as a GEF for RHOC. Chaperones the downstream trafficking and/or processing of small newly prenylated GTPases. Escorts RAC1 to the nucleus. This is Rap1 GTPase-GDP dissociation stimulator 1 from Homo sapiens (Human).